A 42-amino-acid polypeptide reads, in one-letter code: Beta-defensin 6 (42 aa).

Position 1 is a pyrrolidone carboxylic acid (Q1). 3 disulfide bridges follow: C9–C38, C16–C31, and C21–C39.

The protein belongs to the beta-defensin family. In terms of tissue distribution, neutrophilic granules.

The protein resides in the secreted. Functionally, has bactericidal activity. Active against E.coli ML35 and S.aureus 502A. This Bos taurus (Bovine) protein is Beta-defensin 6 (DEFB6).